The primary structure comprises 387 residues: Protein spaetzle 5 (387 aa).

Positions 1-29 (MTKSIKRPPPFSCKQVLLTYVILAYTVAA) are cleaved as a signal peptide. Positions 30-284 (HSSPPPCGLY…PLKKRSRTKR (255 aa)) are excised as a propeptide. Residues 133-197 (QTPFGGNPQR…SGGHLYINQS (65 aa)) form a disordered region. Asn-195 and Asn-204 each carry an N-linked (GlcNAc...) asparagine glycan. Disordered stretches follow at residues 219–256 (KQRQ…QSKR) and 269–291 (GVEA…GRST). Over residues 237–247 (QTEEAEEQDNP) the composition is skewed to acidic residues. Residues 276-286 (LKKRSRTKRQS) show a composition bias toward basic residues. The Spaetzle domain occupies 291-384 (TLCQTTSQFI…WFPSCCVCTI (94 aa)). Intrachain disulfides connect Cys-293–Cys-350, Cys-331–Cys-380, and Cys-340–Cys-382.

Homodimer; disulfide-linked. As to expression, detected in the fan-shaped body which is a component of the locomotion center in the central nervous system (CNS) (at protein level).

Neurotrophin which may function as a ligand for the Toll-related receptors Toll-6 and Toll-7. Binds to Toll-7 and Toll-6, and probably acts as their ligands in the promotion of motor axon targeting and neuronal survival in the central nervous system (CNS). Involved in synaptic targeting of ISNb/d motorneurons and also some SNa motorneurons. May be involved in the normal development of specific neurons at the neuromuscular junction. The chain is Protein spaetzle 5 from Drosophila melanogaster (Fruit fly).